Here is a 915-residue protein sequence, read N- to C-terminus: Probable serine/threonine-protein kinase dyrk2 (915 aa).

Low complexity-rich tracts occupy residues 51–79, 108–119, 170–185, and 196–218; these read TSNT…PTIS, SSSKSSSNSSSI, SSSS…STTS, and SSNS…SGSS. 3 disordered regions span residues 51-119, 132-334, and 349-533; these read TSNT…SSSI, FSSS…SKSS, and AIKS…PTKS. Residues 234 to 260 are compositionally biased toward polar residues; sequence PSHTISDSPRSSTMKSRSVSISNGSLF. Low complexity-rich tracts occupy residues 261 to 287, 300 to 333, 352 to 364, 379 to 391, 399 to 425, and 433 to 533; these read SPTN…SSIS, SSST…PSKS, SRSL…LARV, SSSS…SFSS, SSSK…ASKI, and SLSS…PTKS. One can recognise a Protein kinase domain in the interval 605 to 902; sequence FEIVSILGQG…AEQGLKHDWI (298 aa). Residues 611 to 619 and K634 each bind ATP; that span reads LGQGSFCQV. Residue D731 is the Proton acceptor of the active site.

It belongs to the protein kinase superfamily. CMGC Ser/Thr protein kinase family. MNB/DYRK subfamily.

The enzyme catalyses L-seryl-[protein] + ATP = O-phospho-L-seryl-[protein] + ADP + H(+). The catalysed reaction is L-threonyl-[protein] + ATP = O-phospho-L-threonyl-[protein] + ADP + H(+). It catalyses the reaction L-tyrosyl-[protein] + ATP = O-phospho-L-tyrosyl-[protein] + ADP + H(+). This is Probable serine/threonine-protein kinase dyrk2 (dyrk2) from Dictyostelium discoideum (Social amoeba).